We begin with the raw amino-acid sequence, 317 residues long: Apolipoprotein E (317 aa).

An N-terminal signal peptide occupies residues 1–18; it reads MKVLWAALLVTFLAGCQA. 8 tandem repeats follow at residues 80–101, 102–123, 124–145, 146–167, 168–189, 190–211, 212–233, and 234–255. The 8 X 22 AA approximate tandem repeats stretch occupies residues 80 to 255; it reads TLMDETMKEL…RLDEVKEQVA (176 aa). M143 carries the methionine sulfoxide modification. The residue at position 147 (S147) is a Phosphoserine. The LDL and other lipoprotein receptors binding stretch occupies residues 158 to 168; it reads HLRKLRKRLLR. 162–165 contributes to the heparin binding site; sequence LRKR. Positions 210 to 290 are lipid-binding and lipoprotein association; the sequence is AATVGSLASQ…SWFEPLVEDM (81 aa). 229–236 is a binding site for heparin; it reads GERLRARM. The segment at 266-317 is homooligomerization; it reads QQISLQAEAFQARLKSWFEPLVEDMQRQWAGLVEKVQAAVGASTAPVPSDNH. The segment at 278-290 is specificity for association with VLDL; it reads RLKSWFEPLVEDM.

The protein belongs to the apolipoprotein A1/A4/E family. As to quaternary structure, homotetramer. May interact with ABCA1; functionally associated with ABCA1 in the biogenesis of HDLs. May interact with APP/A4 amyloid-beta peptide; the interaction is extremely stable in vitro but its physiological significance is unclear. May interact with MAPT. May interact with MAP2. In the cerebrospinal fluid, interacts with secreted SORL1. Interacts with PMEL; this allows the loading of PMEL luminal fragment on ILVs to induce fibril nucleation. Post-translationally, APOE exists as multiple glycosylated and sialylated glycoforms within cells and in plasma. The extent of glycosylation and sialylation are tissue and context specific. Glycated in plasma VLDL. In terms of processing, phosphorylated by FAM20C in the extracellular medium.

The protein resides in the secreted. It localises to the extracellular space. The protein localises to the extracellular matrix. It is found in the extracellular vesicle. Its subcellular location is the endosome. The protein resides in the multivesicular body. Functionally, APOE is an apolipoprotein, a protein associating with lipid particles, that mainly functions in lipoprotein-mediated lipid transport between organs via the plasma and interstitial fluids. APOE is a core component of plasma lipoproteins and is involved in their production, conversion and clearance. Apolipoproteins are amphipathic molecules that interact both with lipids of the lipoprotein particle core and the aqueous environment of the plasma. As such, APOE associates with chylomicrons, chylomicron remnants, very low density lipoproteins (VLDL) and intermediate density lipoproteins (IDL) but shows a preferential binding to high-density lipoproteins (HDL). It also binds a wide range of cellular receptors including the LDL receptor/LDLR, the LDL receptor-related proteins LRP1, LRP2 and LRP8 and the very low-density lipoprotein receptor/VLDLR that mediate the cellular uptake of the APOE-containing lipoprotein particles. Finally, APOE also has a heparin-binding activity and binds heparan-sulfate proteoglycans on the surface of cells, a property that supports the capture and the receptor-mediated uptake of APOE-containing lipoproteins by cells. A main function of APOE is to mediate lipoprotein clearance through the uptake of chylomicrons, VLDLs, and HDLs by hepatocytes. APOE is also involved in the biosynthesis by the liver of VLDLs as well as their uptake by peripheral tissues ensuring the delivery of triglycerides and energy storage in muscle, heart and adipose tissues. By participating in the lipoprotein-mediated distribution of lipids among tissues, APOE plays a critical role in plasma and tissues lipid homeostasis. APOE is also involved in two steps of reverse cholesterol transport, the HDLs-mediated transport of cholesterol from peripheral tissues to the liver, and thereby plays an important role in cholesterol homeostasis. First, it is functionally associated with ABCA1 in the biogenesis of HDLs in tissues. Second, it is enriched in circulating HDLs and mediates their uptake by hepatocytes. APOE also plays an important role in lipid transport in the central nervous system, regulating neuron survival and sprouting. This chain is Apolipoprotein E (APOE), found in Papio anubis (Olive baboon).